We begin with the raw amino-acid sequence, 600 residues long: DDB1- and CUL4-associated factor 15 (600 aa).

Positions 1 to 30 (MAPSSKSERNSGAGSGGGGPGGAGGKRAAG) are disordered. The segment covering 13 to 27 (AGSGGGGPGGAGGKR) has biased composition (gly residues). At Ser50 the chain carries Phosphoserine. Zn(2+)-binding residues include Cys193, Cys196, Cys211, and His214. E7820-binding positions include Phe231 and 234 to 235 (AF). The span at 280–295 (PASPPEPQSPELPPAL) shows a compositional bias: pro residues. The tract at residues 280–316 (PASPPEPQSPELPPALPSFCPEAAPARSSGSPEPSPA) is disordered. A phosphoserine mark is found at Ser310 and Ser314.

In terms of assembly, component of the DCX(DCAF15) complex, also named CLR4(DCAF15) complex, composed of DCAF15, DDB1, cullin-4 (CUL4A or CUL4B), DDA1 and RBX1.

Its pathway is protein modification; protein ubiquitination. With respect to regulation, aryl sulfonamide anticancer drugs change the substrate specificity of DCAF15 by acting as a molecular glue that promotes binding between DCAF15 and weak affinity interactors, such as RBM39. Its function is as follows. Substrate-recognition component of the DCX(DCAF15) complex, a cullin-4-RING E3 ubiquitin-protein ligase complex that mediates ubiquitination and degradation of target proteins. The DCX(DCAF15) complex acts as a regulator of the natural killer (NK) cells effector functions, possibly by mediating ubiquitination and degradation of cohesin subunits SMC1A and SMC3. May play a role in the activation of antigen-presenting cells (APC) and their interaction with NK cells. Binding of aryl sulfonamide anticancer drugs, such as indisulam (E7070) or E7820, change the substrate specificity of the DCX(DCAF15) complex, leading to promote ubiquitination and degradation of splicing factor RBM39. RBM39 degradation results in splicing defects and death in cancer cell lines. Aryl sulfonamide anticancer drugs change the substrate specificity of DCAF15 by acting as a molecular glue that promotes binding between DCAF15 and weak affinity interactor RBM39. Aryl sulfonamide anticancer drugs also promote ubiquitination and degradation of RBM23 and PRPF39. This is DDB1- and CUL4-associated factor 15 from Homo sapiens (Human).